A 364-amino-acid chain; its full sequence is MLIFPLINDTSRKIIHIDMDAFFAAVEERDNPALKGKPVVIGKDPRETGGRGVVSTCNYEARKYGIHSAMSSKEAYERCPKAIFISGNYEKYRTVGDQIRRIFKRYTDVVEPMSIDEAYLDVTNNKLGIKSAVKIAKLIQHDIWKEVGLTCSAGVSYNKFLAKLASDFEKPHGLTLVLKEDALCFLAKLPIEKFHGVGKKSVEKLHDMGIYTGQDLLAVPEMTLIDHFGRFGFDLYRKARGISNSPVKSDRIRKSIGSERTYAKLLYQETDIKAEISKNAKRVAALLQDHKKLGKTIVLKVRYADFTTLTKRVTLPELTRNAAQIEQVAGDIFDSLSENPAGIRLLGITMTNLEDKVADISLDL.

The UmuC domain maps to Ile-14–Gly-198. Asp-18 and Asp-116 together coordinate Mg(2+). Glu-117 is a catalytic residue.

It belongs to the DNA polymerase type-Y family. In terms of assembly, monomer. Mg(2+) is required as a cofactor.

It localises to the cytoplasm. It catalyses the reaction DNA(n) + a 2'-deoxyribonucleoside 5'-triphosphate = DNA(n+1) + diphosphate. Functionally, poorly processive, error-prone DNA polymerase involved in untargeted mutagenesis. Copies undamaged DNA at stalled replication forks, which arise in vivo from mismatched or misaligned primer ends. These misaligned primers can be extended by PolIV. Exhibits no 3'-5' exonuclease (proofreading) activity. May be involved in translesional synthesis, in conjunction with the beta clamp from PolIII. The sequence is that of DNA polymerase IV from Streptococcus pyogenes serotype M28 (strain MGAS6180).